Consider the following 242-residue polypeptide: Phosphoribosylaminoimidazole-succinocarboxamide synthase (242 aa).

This sequence belongs to the SAICAR synthetase family.

It catalyses the reaction 5-amino-1-(5-phospho-D-ribosyl)imidazole-4-carboxylate + L-aspartate + ATP = (2S)-2-[5-amino-1-(5-phospho-beta-D-ribosyl)imidazole-4-carboxamido]succinate + ADP + phosphate + 2 H(+). The protein operates within purine metabolism; IMP biosynthesis via de novo pathway; 5-amino-1-(5-phospho-D-ribosyl)imidazole-4-carboxamide from 5-amino-1-(5-phospho-D-ribosyl)imidazole-4-carboxylate: step 1/2. The protein is Phosphoribosylaminoimidazole-succinocarboxamide synthase of Trichodesmium erythraeum (strain IMS101).